Here is a 513-residue protein sequence, read N- to C-terminus: ATP synthase subunit alpha 1 (513 aa).

Residue 169 to 176 (GDRQTGKT) coordinates ATP.

Belongs to the ATPase alpha/beta chains family. As to quaternary structure, F-type ATPases have 2 components, CF(1) - the catalytic core - and CF(0) - the membrane proton channel. CF(1) has five subunits: alpha(3), beta(3), gamma(1), delta(1), epsilon(1). CF(0) has three main subunits: a(1), b(2) and c(9-12). The alpha and beta chains form an alternating ring which encloses part of the gamma chain. CF(1) is attached to CF(0) by a central stalk formed by the gamma and epsilon chains, while a peripheral stalk is formed by the delta and b chains.

It localises to the cell inner membrane. It catalyses the reaction ATP + H2O + 4 H(+)(in) = ADP + phosphate + 5 H(+)(out). In terms of biological role, produces ATP from ADP in the presence of a proton gradient across the membrane. The alpha chain is a regulatory subunit. This is ATP synthase subunit alpha 1 from Nitrosomonas eutropha (strain DSM 101675 / C91 / Nm57).